A 229-amino-acid chain; its full sequence is Protein MC132 (229 aa).

In terms of assembly, interacts with host RELA (via RHD domain), ELOB, ELOC and CUL5; these interactions induce the proteasomal degradation of host RELA.

It is found in the host cytoplasm. In terms of biological role, inhibits host NF-kappa-B activation stimulated by IL-1 and multiple PRR viral detection pathways. Targets host NF-kappa-B component RELA/p65 for ubiquitin-dependent proteasomal degradation. The protein is Protein MC132 (MC132) of Homo sapiens (Human).